Here is a 422-residue protein sequence, read N- to C-terminus: UDP-N-acetylglucosamine 1-carboxyvinyltransferase (422 aa).

Residue 22-23 (KN) coordinates phosphoenolpyruvate. Arg-94 contacts UDP-N-acetyl-alpha-D-glucosamine. Cys-118 serves as the catalytic Proton donor. Position 118 is a 2-(S-cysteinyl)pyruvic acid O-phosphothioketal (Cys-118). Residues 123–127 (RPVDL), Asp-309, and Ile-331 contribute to the UDP-N-acetyl-alpha-D-glucosamine site.

It belongs to the EPSP synthase family. MurA subfamily.

The protein localises to the cytoplasm. It carries out the reaction phosphoenolpyruvate + UDP-N-acetyl-alpha-D-glucosamine = UDP-N-acetyl-3-O-(1-carboxyvinyl)-alpha-D-glucosamine + phosphate. It participates in cell wall biogenesis; peptidoglycan biosynthesis. Cell wall formation. Adds enolpyruvyl to UDP-N-acetylglucosamine. This is UDP-N-acetylglucosamine 1-carboxyvinyltransferase from Cereibacter sphaeroides (strain KD131 / KCTC 12085) (Rhodobacter sphaeroides).